The following is a 20-amino-acid chain: Calreticulin (20 aa).

Belongs to the calreticulin family. In terms of processing, glycosylated.

The protein localises to the endoplasmic reticulum lumen. Functionally, molecular calcium-binding chaperone promoting folding, oligomeric assembly and quality control in the ER via the calreticulin/calnexin cycle. This lectin may interact transiently with almost all of the monoglucosylated glycoproteins that are synthesized in the ER. The polypeptide is Calreticulin (Spinacia oleracea (Spinach)).